The sequence spans 279 residues: Thymidylate synthase (279 aa).

Position 133 to 134 (133 to 134 (RR)) interacts with dUMP. Residue Cys154 is the Nucleophile of the active site. DUMP contacts are provided by residues 178–181 (RSND), Asn189, and 219–221 (HIY). Position 181 (Asp181) interacts with (6R)-5,10-methylene-5,6,7,8-tetrahydrofolate. Ala278 serves as a coordination point for (6R)-5,10-methylene-5,6,7,8-tetrahydrofolate.

This sequence belongs to the thymidylate synthase family. Bacterial-type ThyA subfamily. Homodimer.

The protein resides in the cytoplasm. The enzyme catalyses dUMP + (6R)-5,10-methylene-5,6,7,8-tetrahydrofolate = 7,8-dihydrofolate + dTMP. It participates in pyrimidine metabolism; dTTP biosynthesis. Functionally, catalyzes the reductive methylation of 2'-deoxyuridine-5'-monophosphate (dUMP) to 2'-deoxythymidine-5'-monophosphate (dTMP) while utilizing 5,10-methylenetetrahydrofolate (mTHF) as the methyl donor and reductant in the reaction, yielding dihydrofolate (DHF) as a by-product. This enzymatic reaction provides an intracellular de novo source of dTMP, an essential precursor for DNA biosynthesis. This is Thymidylate synthase from Streptococcus gordonii (strain Challis / ATCC 35105 / BCRC 15272 / CH1 / DL1 / V288).